We begin with the raw amino-acid sequence, 188 residues long: dCTP deaminase (188 aa).

Residues 111-116 (KSTYAR), 135-137 (TLE), Gln-156, Tyr-170, and Gln-180 each bind dCTP. The active-site Proton donor/acceptor is Glu-137.

Belongs to the dCTP deaminase family. In terms of assembly, homotrimer.

It carries out the reaction dCTP + H2O + H(+) = dUTP + NH4(+). Its pathway is pyrimidine metabolism; dUMP biosynthesis; dUMP from dCTP (dUTP route): step 1/2. Functionally, catalyzes the deamination of dCTP to dUTP. This is dCTP deaminase from Ralstonia pickettii (strain 12J).